Reading from the N-terminus, the 98-residue chain is MAPAASSAPRLLRAAMLLLLLVAAGRRAAGAPVVNELRCQCLQTLQGIHLKNIQSVKVTTPGPHCDQTEVIATLKTGQEVCLNPAAPMVKKIIDKMLN.

An N-terminal signal peptide occupies residues Met1–Ala29. Cystine bridges form between Cys39–Cys65 and Cys41–Cys81.

This sequence belongs to the intercrine alpha (chemokine CxC) family.

It is found in the secreted. This Bos taurus (Bovine) protein is Growth-regulated protein homolog gamma.